The primary structure comprises 678 residues: NADPH--cytochrome P450 reductase (678 aa).

The Lumenal portion of the chain corresponds to 1 to 21 (MADSNMDAGTTTSEMVAEEVS). Residues 22 to 42 (LFSTTDVILFSLIVGVMTYWF) traverse the membrane as a helical segment. Topologically, residues 43 to 678 (LFRKKKEEVP…KGRYSLDVWS (636 aa)) are cytoplasmic. A Phosphoserine modification is found at Ser-63. In terms of domain architecture, Flavodoxin-like spans 80 to 224 (IIVFYGSQTG…DFITWREQFW (145 aa)). FMN-binding positions include 86–91 (SQTGTA), 138–141 (ATYG), 173–182 (LGNKTYEHFN), and Asp-208. Residues 279 to 521 (KNPFLAVVTT…YVRKSQFRLP (243 aa)) form the FAD-binding FR-type domain. Position 298 (Arg-298) interacts with NADP(+). FAD is bound by residues Arg-424, 454-457 (RYYS), 472-474 (CAV), Tyr-478, and 488-491 (GVAT). NADP(+) is bound by residues Thr-535, 596–597 (SR), 602–606 (KVYVQ), and Asp-639. An FAD-binding site is contributed by Trp-677.

This sequence belongs to the NADPH--cytochrome P450 reductase family. It in the N-terminal section; belongs to the flavodoxin family. In the C-terminal section; belongs to the flavoprotein pyridine nucleotide cytochrome reductase family. FAD serves as cofactor. Requires FMN as cofactor.

It is found in the endoplasmic reticulum membrane. It carries out the reaction 2 oxidized [cytochrome P450] + NADPH = 2 reduced [cytochrome P450] + NADP(+) + H(+). Functionally, this enzyme is required for electron transfer from NADP to cytochrome P450 in microsomes. It can also provide electron transfer to heme oxygenase and cytochrome B5. The sequence is that of NADPH--cytochrome P450 reductase from Bos taurus (Bovine).